Reading from the N-terminus, the 133-residue chain is Crossover junction endodeoxyribonuclease Hjc (133 aa).

Glutamate 12 contacts Mg(2+). Serine 32 is an active-site residue. 2 residues coordinate Mg(2+): aspartate 36 and glutamate 49.

It belongs to the Holliday junction resolvase Hjc family. As to quaternary structure, homodimer. It depends on Mg(2+) as a cofactor.

It carries out the reaction Endonucleolytic cleavage at a junction such as a reciprocal single-stranded crossover between two homologous DNA duplexes (Holliday junction).. A structure-specific endonuclease that resolves Holliday junction (HJ) intermediates during genetic recombination. Cleaves 4-way DNA junctions introducing paired nicks in opposing strands, leaving a 5'-terminal phosphate and a 3'-terminal hydroxyl group that are subsequently ligated to produce recombinant products. The sequence is that of Crossover junction endodeoxyribonuclease Hjc from Methanocaldococcus jannaschii (strain ATCC 43067 / DSM 2661 / JAL-1 / JCM 10045 / NBRC 100440) (Methanococcus jannaschii).